A 550-amino-acid chain; its full sequence is Phospholipase B-like 1 (550 aa).

An N-terminal signal peptide occupies residues 1-39; the sequence is MCHRSHGRSLRPPSPLLLLLPLLLQSPWAAGAAEKHNSA. N-linked (GlcNAc...) (high mannose) asparagine; alternate glycosylation occurs at Asn-72. Asn-72 carries N-linked (GlcNAc...) (hybrid) asparagine; alternate glycosylation. Positions 210-228 are cleaved as a propeptide — removed in mature form; it reads LSPTKSSSLKKFKIWEMGH. Asn-309 and Asn-412 each carry an N-linked (GlcNAc...) (high mannose) asparagine; alternate glycan. N-linked (GlcNAc...) (hybrid) asparagine; alternate glycosylation is found at Asn-309 and Asn-412. 2 disulfide bridges follow: Cys-471–Cys-476 and Cys-475–Cys-490. An N-linked (GlcNAc...) (high mannose) asparagine; alternate glycan is attached at Asn-527. Asn-527 carries N-linked (GlcNAc...) (hybrid) asparagine; alternate glycosylation.

This sequence belongs to the phospholipase B-like family. May form a homodimer, each monomer is composed of a chain A and a chain B. Post-translationally, the maturation cleavages that produces chains A and B are required to open the putative substrate binding pocket. Both chains A and B remain associated in the mature protein.

It localises to the lysosome. Functionally, exhibits weak phospholipase activity, acting on various phospholipids, including phosphatidylcholine, phosphatidylinositol, phosphatidylethanolamine and lysophospholipids. However, in view of the small size of the putative binding pocket, it has been proposed that it may act rather as an amidase or a peptidase. This chain is Phospholipase B-like 1 (Plbd1), found in Rattus norvegicus (Rat).